The primary structure comprises 182 residues: Putative pre-16S rRNA nuclease (182 aa).

Belongs to the YqgF nuclease family.

It localises to the cytoplasm. Functionally, could be a nuclease involved in processing of the 5'-end of pre-16S rRNA. The protein is Putative pre-16S rRNA nuclease of Corynebacterium aurimucosum (strain ATCC 700975 / DSM 44827 / CIP 107346 / CN-1) (Corynebacterium nigricans).